Reading from the N-terminus, the 740-residue chain is Polyribonucleotide nucleotidyltransferase (740 aa).

Mg(2+) contacts are provided by Asp-514 and Asp-520. A KH domain is found at 580–639 (PRIITVKIPVDKIGEVIGPKRQMINQIQEDTGAEITIEDDGTIYIGAADGPAAEAARATI). The S1 motif domain occupies 651–723 (GERILGSVVK…SRGKLSLIPV (73 aa)).

This sequence belongs to the polyribonucleotide nucleotidyltransferase family. Homotrimer. Mg(2+) serves as cofactor.

Its subcellular location is the cytoplasm. The catalysed reaction is RNA(n+1) + phosphate = RNA(n) + a ribonucleoside 5'-diphosphate. In terms of biological role, involved in mRNA degradation. Catalyzes the phosphorolysis of single-stranded polyribonucleotides processively in the 3'- to 5'-direction. This chain is Polyribonucleotide nucleotidyltransferase, found in Streptomyces antibioticus.